The following is a 164-amino-acid chain: Thiol peroxidase (164 aa).

The region spanning 16–162 is the Thioredoxin domain; sequence LQVGDIAKDF…YEAAINAAKI (147 aa). Cys58 acts as the Cysteine sulfenic acid (-SOH) intermediate in catalysis. Cys58 and Cys92 are disulfide-bonded.

The protein belongs to the peroxiredoxin family. Tpx subfamily. Homodimer.

The catalysed reaction is a hydroperoxide + [thioredoxin]-dithiol = an alcohol + [thioredoxin]-disulfide + H2O. In terms of biological role, thiol-specific peroxidase that catalyzes the reduction of hydrogen peroxide and organic hydroperoxides to water and alcohols, respectively. Plays a role in cell protection against oxidative stress by detoxifying peroxides. The sequence is that of Thiol peroxidase from Streptococcus agalactiae serotype V (strain ATCC BAA-611 / 2603 V/R).